The following is a 106-amino-acid chain: MQQVFRREGINLYYYSNKTKKFSLDSWYLPQLHLLESKGNKKSKAATDQYFIHPSRTRQERDLTDRKHRPEQQQLQRRVTRWKKEVTTRSRPKETSSTHLPYHGSY.

Residues lysine 38–tyrosine 106 form a disordered region. Composition is skewed to basic and acidic residues over residues threonine 57–glutamate 71 and tryptophan 82–serine 96.

Its subcellular location is the mitochondrion. This is an uncharacterized protein from Arabidopsis thaliana (Mouse-ear cress).